Here is a 330-residue protein sequence, read N- to C-terminus: DNA-directed RNA polymerase subunit alpha (330 aa).

An alpha N-terminal domain (alpha-NTD) region spans residues 1 to 236 (MQGSVTEFLK…EQLDAFVDLR (236 aa)). The interval 250-330 (FDPILLRPVD…NWPPASIAED (81 aa)) is alpha C-terminal domain (alpha-CTD).

The protein belongs to the RNA polymerase alpha chain family. Homodimer. The RNAP catalytic core consists of 2 alpha, 1 beta, 1 beta' and 1 omega subunit. When a sigma factor is associated with the core the holoenzyme is formed, which can initiate transcription.

It carries out the reaction RNA(n) + a ribonucleoside 5'-triphosphate = RNA(n+1) + diphosphate. Functionally, DNA-dependent RNA polymerase catalyzes the transcription of DNA into RNA using the four ribonucleoside triphosphates as substrates. The sequence is that of DNA-directed RNA polymerase subunit alpha from Vibrio campbellii (strain ATCC BAA-1116).